Consider the following 198-residue polypeptide: Ribonuclease HII (198 aa).

Residues 10 to 198 (QLVAGVDEVG…PVKRALGLAS (189 aa)) form the RNase H type-2 domain. 3 residues coordinate a divalent metal cation: Asp16, Glu17, and Asp108.

The protein belongs to the RNase HII family. It depends on Mn(2+) as a cofactor. Requires Mg(2+) as cofactor.

It localises to the cytoplasm. The enzyme catalyses Endonucleolytic cleavage to 5'-phosphomonoester.. Its function is as follows. Endonuclease that specifically degrades the RNA of RNA-DNA hybrids. The protein is Ribonuclease HII of Shigella boydii serotype 4 (strain Sb227).